Reading from the N-terminus, the 230-residue chain is 8-demethylnovobiocic acid C(8)-methyltransferase (230 aa).

It belongs to the methyltransferase superfamily.

The catalysed reaction is 8-desmethylnovobiocic acid + S-adenosyl-L-methionine = novobiocic acid + S-adenosyl-L-homocysteine + H(+). Its pathway is antibiotic biosynthesis; novobiocin biosynthesis. Its function is as follows. C-methyltransferase that methylates 8-demethylnovobiocic acid to produce novobiocic acid in the novobiocin biosynthesis pathway. Novobiocin is an aminocoumarin family antibiotic that targets bacterial DNA gyrases. The sequence is that of 8-demethylnovobiocic acid C(8)-methyltransferase (novO) from Streptomyces niveus (Streptomyces spheroides).